The chain runs to 413 residues: F-box protein CPR1 (413 aa).

One can recognise an F-box domain in the interval 1-48 (MATIPMDIVNDIFLRLPAKTLVRCRALSKPCYHLINDPDFIESHLHRV).

As to quaternary structure, part of a SCF (ASK-cullin-F-box) protein ligase complex. Interacts with SKP1A/ASK1, SPK1B/ASK2, ASK9, ASK10, ASK11, ASK13, ASK14, ASK16, ASK17, ASK18 and ASK19. Interacts with TRAF1B. In terms of tissue distribution, expressed in seedling, root, stem, leaves, inflorescence and silique, especially in veins and trichomes.

Its subcellular location is the cytoplasm. It localises to the nucleus. It participates in protein modification; protein ubiquitination. Component of SCF(ASK-cullin-F-box) E3 ubiquitin ligase complexes, which may mediate the ubiquitination and subsequent proteasomal degradation of target proteins. Regulates negatively both salicylic acid (SA)-dependent and SA-independent defense signaling. The chain is F-box protein CPR1 (CPR1) from Arabidopsis thaliana (Mouse-ear cress).